The primary structure comprises 311 residues: Pantothenate synthetase (311 aa).

Position 43-50 (43-50 (MGALHEGH)) interacts with ATP. H50 acts as the Proton donor in catalysis. Q75 serves as a coordination point for (R)-pantoate. A beta-alanine-binding site is contributed by Q75. ATP is bound at residue 161–164 (GEKD). Residue Q167 coordinates (R)-pantoate. ATP is bound by residues V190 and 198 to 201 (MSSR).

Belongs to the pantothenate synthetase family. As to quaternary structure, homodimer.

The protein resides in the cytoplasm. It catalyses the reaction (R)-pantoate + beta-alanine + ATP = (R)-pantothenate + AMP + diphosphate + H(+). Its pathway is cofactor biosynthesis; (R)-pantothenate biosynthesis; (R)-pantothenate from (R)-pantoate and beta-alanine: step 1/1. Catalyzes the condensation of pantoate with beta-alanine in an ATP-dependent reaction via a pantoyl-adenylate intermediate. In Mycolicibacterium vanbaalenii (strain DSM 7251 / JCM 13017 / BCRC 16820 / KCTC 9966 / NRRL B-24157 / PYR-1) (Mycobacterium vanbaalenii), this protein is Pantothenate synthetase.